The chain runs to 509 residues: Cruciferin CRU1 (509 aa).

The N-terminal stretch at 1–23 is a signal peptide; the sequence is MVKVPHLLVATFGVLLVLNGCLA. Residues Cys37 and Cys70 are joined by a disulfide bond. The Cupin type-1 1 domain occupies 42–271; the sequence is LDVLQPTETI…ALKIDVRLAQ (230 aa). 2 positions are modified to phosphoserine: Ser53 and Ser97. Cys113 and Cys326 form a disulfide bridge. Phosphothreonine is present on Thr116. Disordered regions lie at residues 119 to 175, 230 to 249, and 301 to 321; these read DSQP…GFRD, RLAG…QQQN, and YESE…DNGL. Over residues 124–172 the composition is skewed to low complexity; the sequence is QGQQQGQPWQGQQGQQGQQGQQGQQGQQGQQGQQGQQGQQGQQGQQQQG. One can recognise a Cupin type-1 2 domain in the interval 332 to 481; it reads ENIDDPARAD…AFQISLEEAR (150 aa). Ser352 carries the post-translational modification Phosphoserine. Thr445 and Thr487 each carry phosphothreonine.

Belongs to the 11S seed storage protein (globulins) family. In terms of assembly, hexamer; each subunit is composed of an acidic and a basic chain derived from a single precursor and linked by a disulfide bond.

This is a seed storage protein. The sequence is that of Cruciferin CRU1 (CRU1) from Brassica napus (Rape).